The primary structure comprises 34 residues: N(4)-(Beta-N-acetylglucosaminyl)-L-asparaginase (34 aa).

Thr18 (nucleophile) is an active-site residue.

This sequence belongs to the Ntn-hydrolase family. As to quaternary structure, heterotetramer of two alpha and two beta chains arranged as a dimer of alpha/beta heterodimers. Cleaved into an alpha and beta chain by autocatalysis; this activates the enzyme. The N-terminal residue of the beta subunit is responsible for the nucleophile hydrolase activity. Post-translationally, N-glycosylated.

The protein localises to the lysosome. The enzyme catalyses N(4)-(beta-N-acetyl-D-glucosaminyl)-L-asparagine + H2O = N-acetyl-beta-D-glucosaminylamine + L-aspartate + H(+). In terms of biological role, cleaves the GlcNAc-Asn bond which joins oligosaccharides to the peptide of asparagine-linked glycoproteins. The sequence is that of N(4)-(Beta-N-acetylglucosaminyl)-L-asparaginase (AGA) from Sus scrofa (Pig).